The following is a 153-amino-acid chain: Bud site selection protein 25 (153 aa).

Involved in bud site selection. Required for resistance to the DNA-damaging agent methyl methanesulfonate (MMS). The protein is Bud site selection protein 25 of Saccharomyces cerevisiae (strain ATCC 204508 / S288c) (Baker's yeast).